The chain runs to 111 residues: Capsid assembly protein Gp31 (111 aa).

Homoheptamer. Forms a stable complex with groEL in the presence of ATP.

In terms of biological role, essential for proper capsid assembly. In absence of Gp31 the major capsid protein (Gp23) assembles into 'lumps'. Acts as a co-chaperonin with the host groEL protein. This Escherichia coli (Bacteriophage T4) protein is Capsid assembly protein Gp31 (31).